The primary structure comprises 258 residues: L-fucose dehydrogenase (258 aa).

7 residues coordinate NADP(+): serine 17, isoleucine 19, arginine 39, histidine 40, glutamate 63, leucine 64, and asparagine 90. Positions 94, 140, 141, 147, and 153 each coordinate beta-L-fucose. Positions 153 and 157 each coordinate NADP(+). Tyrosine 153 serves as the catalytic Proton acceptor. Beta-L-fucose contacts are provided by alanine 184 and glutamate 185. Residues valine 186 and threonine 188 each contribute to the NADP(+) site.

The protein belongs to the short-chain dehydrogenases/reductases (SDR) family. In terms of assembly, homotetramer; dimer of dimers.

The catalysed reaction is beta-L-fucose + NADP(+) = L-fucono-1,5-lactone + NADPH + H(+). The enzyme catalyses D-arabinose + NADP(+) = D-arabinono-1,5-lactone + NADPH + H(+). It participates in carbohydrate degradation; L-fucose degradation. Its function is as follows. L-fucose dehydrogenase involved in an L-fucose degradation pathway. Catalyzes the oxidation of L-fucose to L-fucono-1,5-lactone. Can also act on D-arabinose, with lower catalytic efficiency, and has weak activity with L-galactose and 4-deoxy-L-fucose. Shows a preference for NADP(+) over NAD(+). This chain is L-fucose dehydrogenase, found in Burkholderia multivorans (strain ATCC 17616 / 249).